The following is a 479-amino-acid chain: Pyruvate kinase (479 aa).

R36 serves as a coordination point for substrate. Residues N38, S40, and D70 each contribute to the K(+) site. 38–41 (NFSH) is a binding site for ATP. 2 residues coordinate ATP: R77 and K160. Mg(2+) is bound at residue E225. Residues G251, D252, and T284 each coordinate substrate. D252 lines the Mg(2+) pocket.

Belongs to the pyruvate kinase family. Homotetramer. Requires Mg(2+) as cofactor. K(+) is required as a cofactor.

The enzyme catalyses pyruvate + ATP = phosphoenolpyruvate + ADP + H(+). It functions in the pathway carbohydrate degradation; glycolysis; pyruvate from D-glyceraldehyde 3-phosphate: step 5/5. Its activity is regulated as follows. Allosterically activated by AMP and by several sugar phosphates. Belongs to type II PK. This Buchnera aphidicola subsp. Baizongia pistaciae (strain Bp) protein is Pyruvate kinase (pykA).